Here is a 423-residue protein sequence, read N- to C-terminus: UDP-N-acetylglucosamine 1-carboxyvinyltransferase (423 aa).

22–23 (KN) is a binding site for phosphoenolpyruvate. Arg98 contributes to the UDP-N-acetyl-alpha-D-glucosamine binding site. Cys122 acts as the Proton donor in catalysis. Cys122 is modified (2-(S-cysteinyl)pyruvic acid O-phosphothioketal). UDP-N-acetyl-alpha-D-glucosamine is bound by residues 127-131 (RPVDQ), Asp311, and Ile333.

This sequence belongs to the EPSP synthase family. MurA subfamily.

The protein resides in the cytoplasm. It carries out the reaction phosphoenolpyruvate + UDP-N-acetyl-alpha-D-glucosamine = UDP-N-acetyl-3-O-(1-carboxyvinyl)-alpha-D-glucosamine + phosphate. It functions in the pathway cell wall biogenesis; peptidoglycan biosynthesis. Cell wall formation. Adds enolpyruvyl to UDP-N-acetylglucosamine. In Stenotrophomonas maltophilia (strain K279a), this protein is UDP-N-acetylglucosamine 1-carboxyvinyltransferase.